Reading from the N-terminus, the 131-residue chain is Guanyl-specific ribonuclease F1 (131 aa).

An N-terminal signal peptide occupies residues 1–25 (MLFFKSIASLAALVSLAVASPIESR). Gln26 bears the Pyrrolidone carboxylic acid mark. Intrachain disulfides connect Cys31/Cys127 and Cys49/Cys108. Residue His65 is part of the active site. Glu83 (proton acceptor) is an active-site residue. The Proton donor role is filled by His116.

This sequence belongs to the ribonuclease N1/T1 family.

The catalysed reaction is [RNA] containing guanosine + H2O = an [RNA fragment]-3'-guanosine-3'-phosphate + a 5'-hydroxy-ribonucleotide-3'-[RNA fragment].. The chain is Guanyl-specific ribonuclease F1 from Fusarium fujikuroi (Bakanae and foot rot disease fungus).